The following is a 159-amino-acid chain: Putative pre-16S rRNA nuclease (159 aa).

Belongs to the YqgF nuclease family.

The protein resides in the cytoplasm. In terms of biological role, could be a nuclease involved in processing of the 5'-end of pre-16S rRNA. The protein is Putative pre-16S rRNA nuclease of Thermobifida fusca (strain YX).